A 367-amino-acid chain; its full sequence is Pre-small/secreted glycoprotein (367 aa).

Residues 1–33 (MGSGYQLLQLPRERFRKTSFLVWVIILFQRAIS) form the signal peptide. A glycan (N-linked (GlcNAc...) asparagine; by host) is linked at Asn-41. 2 disulfides stabilise this stretch: Cys-109–Cys-136 and Cys-122–Cys-148. 4 N-linked (GlcNAc...) asparagine; by host glycosylation sites follow: Asn-205, Asn-239, Asn-258, and Asn-269.

It belongs to the filoviruses glycoprotein family. Homodimer; disulfide-linked. The homodimers are linked by two disulfide bonds in a parallel orientation. As to quaternary structure, monomer. Post-translationally, this precursor is processed into mature sGP and delta-peptide by host furin or furin-like proteases. The cleavage site corresponds to the furin optimal cleavage sequence [KR]-X-[KR]-R. N-glycosylated. In terms of processing, O-glycosylated.

It is found in the secreted. In terms of biological role, seems to possess an anti-inflammatory activity as it can reverse the barrier-decreasing effects of TNF alpha. Might therefore contribute to the lack of inflammatory reaction seen during infection in spite the of extensive necrosis and massive virus production. Does not seem to be involved in activation of primary macrophages. Does not seem to interact specifically with neutrophils. Viroporin that permeabilizes mammalian cell plasma membranes. It acts by altering permeation of ionic compounds and small molecules. This activity may lead to viral enterotoxic activity. The chain is Pre-small/secreted glycoprotein (GP) from Reston ebolavirus (strain Siena/Philippine-92) (REBOV).